Consider the following 156-residue polypeptide: Small ribosomal subunit protein uS7 (156 aa).

This sequence belongs to the universal ribosomal protein uS7 family. Part of the 30S ribosomal subunit. Contacts proteins S9 and S11.

In terms of biological role, one of the primary rRNA binding proteins, it binds directly to 16S rRNA where it nucleates assembly of the head domain of the 30S subunit. Is located at the subunit interface close to the decoding center, probably blocks exit of the E-site tRNA. This chain is Small ribosomal subunit protein uS7, found in Parafrankia sp. (strain EAN1pec).